The chain runs to 270 residues: Formamidopyrimidine-DNA glycosylase (270 aa).

Proline 2 serves as the catalytic Schiff-base intermediate with DNA. Glutamate 3 acts as the Proton donor in catalysis. The active-site Proton donor; for beta-elimination activity is the lysine 58. Residues histidine 91, arginine 109, and arginine 151 each contribute to the DNA site. The FPG-type zinc-finger motif lies at 236 to 270 (MVYNRQEEPCRLCGTPIRQIRQGQRSTYYCPLCQP). The active-site Proton donor; for delta-elimination activity is the arginine 260.

It belongs to the FPG family. In terms of assembly, monomer. Requires Zn(2+) as cofactor.

The catalysed reaction is Hydrolysis of DNA containing ring-opened 7-methylguanine residues, releasing 2,6-diamino-4-hydroxy-5-(N-methyl)formamidopyrimidine.. The enzyme catalyses 2'-deoxyribonucleotide-(2'-deoxyribose 5'-phosphate)-2'-deoxyribonucleotide-DNA = a 3'-end 2'-deoxyribonucleotide-(2,3-dehydro-2,3-deoxyribose 5'-phosphate)-DNA + a 5'-end 5'-phospho-2'-deoxyribonucleoside-DNA + H(+). Its function is as follows. Involved in base excision repair of DNA damaged by oxidation or by mutagenic agents. Acts as a DNA glycosylase that recognizes and removes damaged bases. Has a preference for oxidized purines, such as 7,8-dihydro-8-oxoguanine (8-oxoG). Has AP (apurinic/apyrimidinic) lyase activity and introduces nicks in the DNA strand. Cleaves the DNA backbone by beta-delta elimination to generate a single-strand break at the site of the removed base with both 3'- and 5'-phosphates. The protein is Formamidopyrimidine-DNA glycosylase of Chromobacterium violaceum (strain ATCC 12472 / DSM 30191 / JCM 1249 / CCUG 213 / NBRC 12614 / NCIMB 9131 / NCTC 9757 / MK).